A 375-amino-acid polypeptide reads, in one-letter code: Citrate synthase (375 aa).

Residues histidine 266 and aspartate 317 contribute to the active site.

This sequence belongs to the citrate synthase family. Homohexamer.

It carries out the reaction oxaloacetate + acetyl-CoA + H2O = citrate + CoA + H(+). It participates in carbohydrate metabolism; tricarboxylic acid cycle; isocitrate from oxaloacetate: step 1/2. Allosterically inhibited by NADH. This chain is Citrate synthase (gltA), found in Mycolicibacterium smegmatis (Mycobacterium smegmatis).